The following is a 177-amino-acid chain: Protein-export protein SecB (177 aa).

The disordered stretch occupies residues 1–22; that stretch reads MSDENNSGAAAPEAQNPGQNAA. Residues 8–22 show a composition bias toward low complexity; that stretch reads GAAAPEAQNPGQNAA.

Belongs to the SecB family. In terms of assembly, homotetramer, a dimer of dimers. One homotetramer interacts with 1 SecA dimer.

The protein localises to the cytoplasm. One of the proteins required for the normal export of preproteins out of the cell cytoplasm. It is a molecular chaperone that binds to a subset of precursor proteins, maintaining them in a translocation-competent state. It also specifically binds to its receptor SecA. In Paracoccus denitrificans (strain Pd 1222), this protein is Protein-export protein SecB.